The following is a 193-amino-acid chain: NADH-quinone oxidoreductase subunit B (193 aa).

Positions M1–V11 are enriched in polar residues. Residues M1–T23 form a disordered region. Positions 72, 73, 137, and 167 each coordinate [4Fe-4S] cluster.

Belongs to the complex I 20 kDa subunit family. NDH-1 is composed of 14 different subunits. Subunits NuoB, C, D, E, F, and G constitute the peripheral sector of the complex. It depends on [4Fe-4S] cluster as a cofactor.

The protein localises to the cell inner membrane. It carries out the reaction a quinone + NADH + 5 H(+)(in) = a quinol + NAD(+) + 4 H(+)(out). Its function is as follows. NDH-1 shuttles electrons from NADH, via FMN and iron-sulfur (Fe-S) centers, to quinones in the respiratory chain. Couples the redox reaction to proton translocation (for every two electrons transferred, four hydrogen ions are translocated across the cytoplasmic membrane), and thus conserves the redox energy in a proton gradient. The chain is NADH-quinone oxidoreductase subunit B from Brucella canis (strain ATCC 23365 / NCTC 10854 / RM-666).